A 442-amino-acid chain; its full sequence is MITLKEALSKPKGELQEIKDELKKRAQEQSEINAYVALDESGEGVPVAIKDNIQVDGWEVTCASKILKGYIAPYDATVIQKLRANGLAPFGRTNMDEFAMGSTTETSCYGKTLNPKDTSRVPGGSSGGSAAAVAAGIAIAALGSDTGGSIRQPAAFCGVVGMKPTYGRVSRYGLAAYGSSLDQIGPMTQNVEDAAILYNIIAGSDAKDSTSARIECKPVVPDPKRKLKIGVVPNYVKDASGAIQKAYDKAIEALKQEGHEIIEISLMDAKYDIASYYITAMAEASTNLSRYDGVRYGYRAEAKNLKEMYLKTRSEGFGEEVKRRILLGTFVLSSGYYDAYYIKAQKARHIIKDEYNKVFEKVDLILSPVAPDVAFEFGAMKTPLEMYLSDVYTIGVNLAGLPAISLPVDEHEGLPVGLQLIGKAFDEQTVFDGAMSLENALK.

Residues lysine 50 and serine 125 each act as charge relay system in the active site. Serine 149 functions as the Acyl-ester intermediate in the catalytic mechanism.

Belongs to the amidase family. GatA subfamily. As to quaternary structure, heterotrimer of A, B and C subunits.

The catalysed reaction is L-glutamyl-tRNA(Gln) + L-glutamine + ATP + H2O = L-glutaminyl-tRNA(Gln) + L-glutamate + ADP + phosphate + H(+). Functionally, allows the formation of correctly charged Gln-tRNA(Gln) through the transamidation of misacylated Glu-tRNA(Gln) in organisms which lack glutaminyl-tRNA synthetase. The reaction takes place in the presence of glutamine and ATP through an activated gamma-phospho-Glu-tRNA(Gln). The protein is Glutamyl-tRNA(Gln) amidotransferase subunit A of Nitratiruptor sp. (strain SB155-2).